Here is a 218-residue protein sequence, read N- to C-terminus: Octanoyltransferase (218 aa).

The BPL/LPL catalytic domain maps to 31–206; the sequence is REAGDEVWLV…QLVKHLDYAE (176 aa). Residues 70-77, 137-139, and 150-152 each bind substrate; these read RGGQVTYH, SLG, and GLA. Catalysis depends on cysteine 168, which acts as the Acyl-thioester intermediate.

The protein belongs to the LipB family.

It is found in the cytoplasm. It carries out the reaction octanoyl-[ACP] + L-lysyl-[protein] = N(6)-octanoyl-L-lysyl-[protein] + holo-[ACP] + H(+). It participates in protein modification; protein lipoylation via endogenous pathway; protein N(6)-(lipoyl)lysine from octanoyl-[acyl-carrier-protein]: step 1/2. In terms of biological role, catalyzes the transfer of endogenously produced octanoic acid from octanoyl-acyl-carrier-protein onto the lipoyl domains of lipoate-dependent enzymes. Lipoyl-ACP can also act as a substrate although octanoyl-ACP is likely to be the physiological substrate. The chain is Octanoyltransferase from Pseudomonas syringae pv. tomato (strain ATCC BAA-871 / DC3000).